Reading from the N-terminus, the 76-residue chain is Acyl carrier protein (76 aa).

One can recognise a Carrier domain in the interval 1-76; sequence MALLDDVKAV…DAIKYIENNA (76 aa). Serine 36 is subject to O-(pantetheine 4'-phosphoryl)serine.

It belongs to the acyl carrier protein (ACP) family. 4'-phosphopantetheine is transferred from CoA to a specific serine of apo-ACP by AcpS. This modification is essential for activity because fatty acids are bound in thioester linkage to the sulfhydryl of the prosthetic group.

It localises to the cytoplasm. It functions in the pathway lipid metabolism; fatty acid biosynthesis. In terms of biological role, carrier of the growing fatty acid chain in fatty acid biosynthesis. This Aliarcobacter butzleri (strain RM4018) (Arcobacter butzleri) protein is Acyl carrier protein.